The chain runs to 178 residues: Bryoporin (178 aa).

S51, V83, S102, P104, and Y134 together coordinate phosphocholine. Positions 101–117 are trp-rich region; that stretch reads WSVPFDYNLYSNWWNIA.

Belongs to the actinoporin family. Plant subfamily.

Its activity is regulated as follows. Inhibited by sphingomyelin. Functionally, actinoporin-related protein having hemolytic activity in vitro. Binds probably a phosphocholine derivative with the unique amido or hydroxyl groups found in sphingomyelin. Involved in drought tolerance. The chain is Bryoporin from Physcomitrium patens (Spreading-leaved earth moss).